Consider the following 464-residue polypeptide: 3-isopropylmalate dehydratase large subunit (464 aa).

[4Fe-4S] cluster is bound by residues Cys337, Cys397, and Cys400.

Belongs to the aconitase/IPM isomerase family. LeuC type 1 subfamily. Heterodimer of LeuC and LeuD. The cofactor is [4Fe-4S] cluster.

It carries out the reaction (2R,3S)-3-isopropylmalate = (2S)-2-isopropylmalate. Its pathway is amino-acid biosynthesis; L-leucine biosynthesis; L-leucine from 3-methyl-2-oxobutanoate: step 2/4. Its function is as follows. Catalyzes the isomerization between 2-isopropylmalate and 3-isopropylmalate, via the formation of 2-isopropylmaleate. The protein is 3-isopropylmalate dehydratase large subunit of Bacillus cereus (strain 03BB102).